A 435-amino-acid polypeptide reads, in one-letter code: Virulence factor PIT1 (435 aa).

A run of 5 helical transmembrane segments spans residues 33 to 53 (ETTT…SEVI), 77 to 97 (IFFI…ILVT), 111 to 131 (WAWT…CVIG), 143 to 163 (VASW…MWTN), and 204 to 224 (TFWF…ACCI). N330 carries N-linked (GlcNAc...) asparagine glycosylation. Polar residues predominate over residues 392–404 (SPQMPSKAQSQSI). The disordered stretch occupies residues 392-435 (SPQMPSKAQSQSIPYKREVEVTVDMSPVPPPPGPSPAPLPAPYM). Residues 418–435 (PVPPPPGPSPAPLPAPYM) are compositionally biased toward pro residues.

O-mannosylated by PMT4. Is also N-glycosylated.

The protein resides in the cell membrane. In terms of biological role, plasma membrane virulence factor required for spreading and inducing tumors in infected leaves. The protein is Virulence factor PIT1 of Mycosarcoma maydis (Corn smut fungus).